The chain runs to 836 residues: General vesicular transport factor p115 (836 aa).

A disordered region spans residues 1–22 (MEFLKSGIKTVLGSTEPGQQPS). Residues 12 to 22 (LGSTEPGQQPS) show a composition bias toward polar residues. ARM repeat units follow at residues 24–64 (AETV…VGAQ), 65–124 (GMPP…IKTP), 126–166 (HVTL…LILV), 169–210 (MGVS…VAFE), 211–256 (NAFD…FKEG), 316–359 (RLLH…LGRV), 368–413 (PAIV…QTLL), 424–463 (STGQLLCTGLFSTDALANWFSAVALMHSLVENVALKEELL), 477–518 (TLLE…KALL), 523–577 (TMAY…IIKR), and 579–636 (GQES…LVSG). 2 coiled-coil regions span residues 663–707 (IIRG…DQNT) and 744–806 (NMYF…EEAG). The interval 803-836 (EEAGSTNTLPTSNVAPSVPAAGGGSPIPSGTASR) is disordered. Positions 806-816 (GSTNTLPTSNV) are enriched in polar residues. Residues 817–836 (APSVPAAGGGSPIPSGTASR) show a composition bias toward low complexity.

It belongs to the VDP/USO1/EDE1 family.

The protein resides in the cytoplasm. It localises to the golgi apparatus. Its subcellular location is the golgi stack. The protein localises to the golgi stack membrane. It is found in the endoplasmic reticulum. The protein resides in the endoplasmic reticulum membrane. In terms of biological role, essential for maintaining the architecture of the Golgi stacks and for normal organization of the transitional endoplasmic reticulum (tER). Required for both the formation of the Golgi stacks and the maintenance of the individual cisternae. The chain is General vesicular transport factor p115 from Drosophila melanogaster (Fruit fly).